A 209-amino-acid chain; its full sequence is NADH-quinone oxidoreductase subunit C (209 aa).

It belongs to the complex I 30 kDa subunit family. NDH-1 is composed of 14 different subunits. Subunits NuoB, C, D, E, F, and G constitute the peripheral sector of the complex.

The protein localises to the cell inner membrane. The enzyme catalyses a quinone + NADH + 5 H(+)(in) = a quinol + NAD(+) + 4 H(+)(out). Its function is as follows. NDH-1 shuttles electrons from NADH, via FMN and iron-sulfur (Fe-S) centers, to quinones in the respiratory chain. The immediate electron acceptor for the enzyme in this species is believed to be ubiquinone. Couples the redox reaction to proton translocation (for every two electrons transferred, four hydrogen ions are translocated across the cytoplasmic membrane), and thus conserves the redox energy in a proton gradient. The chain is NADH-quinone oxidoreductase subunit C from Phenylobacterium zucineum (strain HLK1).